A 163-amino-acid chain; its full sequence is D-aminoacyl-tRNA deacylase (163 aa).

The Gly-cisPro motif, important for rejection of L-amino acids signature appears at 141 to 142 (GP).

The protein belongs to the DTD family. As to quaternary structure, homodimer.

The protein localises to the cytoplasm. It catalyses the reaction glycyl-tRNA(Ala) + H2O = tRNA(Ala) + glycine + H(+). The enzyme catalyses a D-aminoacyl-tRNA + H2O = a tRNA + a D-alpha-amino acid + H(+). An aminoacyl-tRNA editing enzyme that deacylates mischarged D-aminoacyl-tRNAs. Also deacylates mischarged glycyl-tRNA(Ala), protecting cells against glycine mischarging by AlaRS. Acts via tRNA-based rather than protein-based catalysis; rejects L-amino acids rather than detecting D-amino acids in the active site. By recycling D-aminoacyl-tRNA to D-amino acids and free tRNA molecules, this enzyme counteracts the toxicity associated with the formation of D-aminoacyl-tRNA entities in vivo and helps enforce protein L-homochirality. This is D-aminoacyl-tRNA deacylase from Neisseria meningitidis serogroup B (strain ATCC BAA-335 / MC58).